A 295-amino-acid polypeptide reads, in one-letter code: Caffeine dehydrogenase subunit beta (295 aa).

The FAD-binding PCMH-type domain maps to 1 to 178 (MKPTAFDYIR…CEIRIPVPSQ (178 aa)). FAD is bound by residues 32–36 (AGGQS) and 111–115 (TLGGN).

In terms of assembly, heterotrimer composed of an alpha (CdhA), a beta (CdhB) and a gamma (CdhC) subunit.

It catalyses the reaction caffeine + a ubiquinone + H2O = 1,3,7-trimethylurate + a ubiquinol. The catalysed reaction is ubiquinone-0 + caffeine + H2O = ubiquinol-0 + 1,3,7-trimethylurate. It carries out the reaction theobromine + a ubiquinone + H2O = 3,7-dimethylurate + a ubiquinol. Functionally, component of the caffeine dehydrogenase complex that catalyzes the hydrolytical oxidation of 1,3,7-trimethylxanthine (caffeine) by incorporation of an oxygen atom originating from a water molecule into position C-8 to produce 1,3,7-trimethyluric acid (TMU). Coenzyme Q0 (ubiquinone-0) is the preferred electron acceptor and, to a lesser extent, coenzyme Q2 (ubiquinone-2) can also be used, but oxygen and NAD(P)(+) cannot. Is involved in a caffeine degradation pathway that allows Pseudomonas sp. strain CBB1 to grow on caffeine as the sole carbon and nitrogen source. Is also active with theobromine as substrate, but shows a very poor activity with theophylline and is not active with xanthine, 3-methylxanthine, 7-methylxanthine, TMU, and 3,7-dimethylurate. This is Caffeine dehydrogenase subunit beta from Pseudomonas sp. (strain CBB1).